Reading from the N-terminus, the 922-residue chain is Pertactin autotransporter (922 aa).

An N-terminal signal peptide occupies residues 1–34 (MNMSLSRIVKAAPLRRTTLAMALGALGAAPAAYA). A Cell attachment site; involved in adhesion to various eukaryotic cell lines motif is present at residues 260-262 (RGD). Repeat copies occupy residues 266 to 270 (GGAVP), 271 to 275 (GGAVP), and 276 to 280 (GGAVP). A 4 X 5 AA tandem repeats of G-G-A-V-P region spans residues 266–290 (GGAVPGGAVPGGAVPGGFGPLLDGW). The stretch at 281–285 (GGFGP) is one 4; approximate repeat. Positions 561–619 (SLVGAKAPPAPKPAPQPGPQPGPQPPQPPQPPQPPQPPQPPQRQPEAPAPQPPAGRELS) are disordered. Residues 568–613 (PPAPKPAPQPGPQPGPQPPQPPQPPQPPQPPQPPQRQPEAPAPQPP) show a composition bias toward pro residues. The segment at 575–603 (PQPGPQPGPQPPQPPQPPQPPQPPQPPQR) is 9 X 3 AA approximate repeats of P-Q-P. In terms of domain architecture, Autotransporter spans 654 to 922 (LNPDAGGAWG…TFHAGYRYSW (269 aa)).

As to quaternary structure, monomer.

It localises to the periplasm. The protein resides in the secreted. It is found in the cell surface. Its subcellular location is the cell outer membrane. Functionally, agglutinogen that binds to eukaryotic cells; a process mediated by the R-G-D sequence. Pertactin may have a role in bacterial adhesion, and thus play a role in virulence. May contribute to the disease state of whooping cough. The protein is Pertactin autotransporter (prn) of Bordetella parapertussis (strain 12822 / ATCC BAA-587 / NCTC 13253).